The chain runs to 143 residues: Large ribosomal subunit protein uL15 (143 aa).

2 stretches are compositionally biased toward basic residues: residues 1-13 (MIRKSKKITKMRG) and 23-38 (KKHRGAGHRGGRGNAG). The tract at residues 1 to 38 (MIRKSKKITKMRGSRTCGYGEAKKHRGAGHRGGRGNAG) is disordered.

It belongs to the universal ribosomal protein uL15 family. As to quaternary structure, part of the 50S ribosomal subunit.

Functionally, binds to the 23S rRNA. The chain is Large ribosomal subunit protein uL15 from Methanococcus maripaludis (strain C6 / ATCC BAA-1332).